The chain runs to 205 residues: Microtubule-associated protein Jupiter (205 aa).

Residue S30 is modified to Phosphoserine. T41, T98, and T102 each carry phosphothreonine. The segment covering 124–135 (LISNSKGNYNGK) has biased composition (polar residues). Positions 124-205 (LISNSKGNYN…PPGGYSSGLW (82 aa)) are disordered. A compositionally biased stretch (low complexity) spans 136–149 (SGSVSSASSSVSSS). Phosphoserine is present on residues S138 and S149. A compositionally biased stretch (polar residues) spans 181–191 (PANNGSSQVIN).

Belongs to the MAP Jupiter family.

The protein localises to the nucleus. The protein resides in the cytoplasm. Its subcellular location is the cytoskeleton. It is found in the spindle. In terms of biological role, binds to all microtubule populations. This Drosophila virilis (Fruit fly) protein is Microtubule-associated protein Jupiter.